The primary structure comprises 175 residues: Protein UPS1, mitochondrial (175 aa).

Residues 1–80 form a required for mitochondrial targeting region; it reads MVLLHKSTHI…RGITETWIIE (80 aa). The 171-residue stretch at 2–172 folds into the PRELI/MSF1 domain; sequence VLLHKSTHIF…VIQKLEEARN (171 aa). Residues tyrosine 26, lysine 58, lysine 148, and asparagine 152 each coordinate a 1,2-diacyl-sn-glycero-3-phosphate.

The protein belongs to the slowmo family. As to quaternary structure, interacts with MDM35. Found associated with a 170 kDa complex.

The protein localises to the mitochondrion inner membrane. The protein resides in the mitochondrion intermembrane space. Functionally, required for maintenance of normal mitochondrial morphology. Required for PCP1-dependent processing of MGM1. The UPS1:MDM35 complex mediates the transfer of phosphatidic acid (PA) between liposomes and probably functions as a PA transporter across the mitochondrion intermembrane space. Phosphatidic acid release requires dissociation of the UPS1:MDM35 complex. Phosphatidic acid import is required for cardiolipin (CL) synthesis in the mitochondrial inner membrane. With UPS2, controls the level of cardiolipin in mitochondria. Cardiolipin is a unique phospholipid with four fatty acid chains and is present mainly in the mitochondrial inner membrane where it stabilizes the electron transport chain supercomplex between complexes III and IV through direct interaction of their subunits. This chain is Protein UPS1, mitochondrial (UPS1), found in Saccharomyces cerevisiae (strain ATCC 204508 / S288c) (Baker's yeast).